Consider the following 629-residue polypeptide: tRNA uridine 5-carboxymethylaminomethyl modification enzyme MnmG (629 aa).

FAD contacts are provided by residues 13-18, V125, and S180; that span reads GGGHAG. 273-287 contacts NAD(+); it reads GPRYCPSIEDKIHRF. An FAD-binding site is contributed by Q370.

It belongs to the MnmG family. In terms of assembly, homodimer. Heterotetramer of two MnmE and two MnmG subunits. The cofactor is FAD.

It is found in the cytoplasm. In terms of biological role, NAD-binding protein involved in the addition of a carboxymethylaminomethyl (cmnm) group at the wobble position (U34) of certain tRNAs, forming tRNA-cmnm(5)s(2)U34. The sequence is that of tRNA uridine 5-carboxymethylaminomethyl modification enzyme MnmG from Shewanella sp. (strain MR-7).